A 443-amino-acid chain; its full sequence is Putative phosphoribosyl transferase MT0597 (443 aa).

In the N-terminal section; belongs to the purine/pyrimidine phosphoribosyltransferase family. This sequence in the C-terminal section; belongs to the dienelactone hydrolase family.

The polypeptide is Putative phosphoribosyl transferase MT0597 (Mycobacterium tuberculosis (strain CDC 1551 / Oshkosh)).